Reading from the N-terminus, the 162-residue chain is UPF0114 protein SO_3997 (162 aa).

The next 3 membrane-spanning stretches (helical) occupy residues Y10–I32, L53–F75, and I136–L156.

Belongs to the UPF0114 family.

The protein resides in the cell membrane. This is UPF0114 protein SO_3997 from Shewanella oneidensis (strain ATCC 700550 / JCM 31522 / CIP 106686 / LMG 19005 / NCIMB 14063 / MR-1).